The sequence spans 147 residues: Hemoglobin subunit gamma (147 aa).

A Globin domain is found at 3-147 (HFTAEEKAII…VAIALGHKYH (145 aa)). Heme b-binding residues include H64 and H93.

This sequence belongs to the globin family. Heterotetramer of two alpha chains and two gamma chains in fetal hemoglobin (Hb F). Red blood cells.

Functionally, gamma chains make up the fetal hemoglobin F, in combination with alpha chains. The protein is Hemoglobin subunit gamma (HBG) of Cephalopachus bancanus (Western tarsier).